A 360-amino-acid polypeptide reads, in one-letter code: tRNA-specific 2-thiouridylase MnmA (360 aa).

ATP-binding positions include 8 to 15 and methionine 34; that span reads GMSGGVDS. The interaction with target base in tRNA stretch occupies residues 94–96; sequence NPD. The active-site Nucleophile is cysteine 99. Residues cysteine 99 and cysteine 195 are joined by a disulfide bond. Glycine 123 contacts ATP. The interval 145-147 is interaction with tRNA; that stretch reads KDQ. Cysteine 195 serves as the catalytic Cysteine persulfide intermediate. The interval 307–308 is interaction with tRNA; it reads RY.

This sequence belongs to the MnmA/TRMU family.

The protein localises to the cytoplasm. It catalyses the reaction S-sulfanyl-L-cysteinyl-[protein] + uridine(34) in tRNA + AH2 + ATP = 2-thiouridine(34) in tRNA + L-cysteinyl-[protein] + A + AMP + diphosphate + H(+). Catalyzes the 2-thiolation of uridine at the wobble position (U34) of tRNA, leading to the formation of s(2)U34. This Methylobacillus flagellatus (strain ATCC 51484 / DSM 6875 / VKM B-1610 / KT) protein is tRNA-specific 2-thiouridylase MnmA.